Reading from the N-terminus, the 311-residue chain is Pyrimidine-specific ribonucleoside hydrolase RihA (311 aa).

Residue His240 is part of the active site.

The protein belongs to the IUNH family. RihA subfamily.

Hydrolyzes with equal efficiency cytidine or uridine to ribose and cytosine or uracil, respectively. This chain is Pyrimidine-specific ribonucleoside hydrolase RihA, found in Escherichia coli (strain SMS-3-5 / SECEC).